A 294-amino-acid polypeptide reads, in one-letter code: Porphobilinogen deaminase (294 aa).

Position 232 is an S-(dipyrrolylmethanemethyl)cysteine (cysteine 232).

The protein belongs to the HMBS family. Monomer. Requires dipyrromethane as cofactor.

The enzyme catalyses 4 porphobilinogen + H2O = hydroxymethylbilane + 4 NH4(+). The protein operates within porphyrin-containing compound metabolism; protoporphyrin-IX biosynthesis; coproporphyrinogen-III from 5-aminolevulinate: step 2/4. Its function is as follows. Tetrapolymerization of the monopyrrole PBG into the hydroxymethylbilane pre-uroporphyrinogen in several discrete steps. The protein is Porphobilinogen deaminase of Corynebacterium diphtheriae (strain ATCC 700971 / NCTC 13129 / Biotype gravis).